Here is a 258-residue protein sequence, read N- to C-terminus: Proteasome subunit beta type-1 (258 aa).

The protein belongs to the peptidase T1B family. As to quaternary structure, the 26S proteasome consists of a 20S proteasome core and two 19S regulatory subunits. The 20S proteasome core is composed of 28 subunits that are arranged in four stacked rings, resulting in a barrel-shaped structure. The two end rings are each formed by seven alpha subunits, and the two central rings are each formed by seven beta subunits. The catalytic chamber with the active sites is on the inside of the barrel.

The protein localises to the cytoplasm. It localises to the nucleus. Functionally, non-catalytic component of the proteasome, a multicatalytic proteinase complex which is characterized by its ability to cleave peptides with Arg, Phe, Tyr, Leu, and Glu adjacent to the leaving group at neutral or slightly basic pH. The proteasome has an ATP-dependent proteolytic activity. In Caenorhabditis elegans, this protein is Proteasome subunit beta type-1 (pbs-6).